A 129-amino-acid polypeptide reads, in one-letter code: Small ribosomal subunit protein uS12 (129 aa).

Asp-89 is subject to 3-methylthioaspartic acid.

It belongs to the universal ribosomal protein uS12 family. In terms of assembly, part of the 30S ribosomal subunit. Contacts proteins S8 and S17. May interact with IF1 in the 30S initiation complex.

With S4 and S5 plays an important role in translational accuracy. Functionally, interacts with and stabilizes bases of the 16S rRNA that are involved in tRNA selection in the A site and with the mRNA backbone. Located at the interface of the 30S and 50S subunits, it traverses the body of the 30S subunit contacting proteins on the other side and probably holding the rRNA structure together. The combined cluster of proteins S8, S12 and S17 appears to hold together the shoulder and platform of the 30S subunit. This Rickettsia akari (strain Hartford) protein is Small ribosomal subunit protein uS12.